The primary structure comprises 472 residues: 2-amino-4-ketopentanoate thiolase beta subunit (472 aa).

At K102 the chain carries N6-(pyridoxal phosphate)lysine. Residues N128 and 238-242 each bind pyridoxal 5'-phosphate; that span reads AGGGN.

This sequence belongs to the threonine synthase family. In terms of assembly, heterodimer with OrtA. It depends on pyridoxal 5'-phosphate as a cofactor.

It catalyses the reaction D-alanine + acetyl-CoA = (2R)-2-amino-4-oxopentanoate + CoA. Functionally, involved in the ornithine fermentation pathway. Catalyzes the thiolytic cleavage of 2-amino-4-ketopentanoate (AKP) with coenzyme A (CoA) to form acetyl-CoA and alanine. It is strictly specific for AKP. This is 2-amino-4-ketopentanoate thiolase beta subunit from Unknown prokaryotic organism.